A 167-amino-acid chain; its full sequence is 3-isopropylmalate dehydratase small subunit (167 aa).

This sequence belongs to the LeuD family. LeuD type 2 subfamily. In terms of assembly, heterodimer of LeuC and LeuD.

The catalysed reaction is (2R,3S)-3-isopropylmalate = (2S)-2-isopropylmalate. The protein operates within amino-acid biosynthesis; L-leucine biosynthesis; L-leucine from 3-methyl-2-oxobutanoate: step 2/4. In terms of biological role, catalyzes the isomerization between 2-isopropylmalate and 3-isopropylmalate, via the formation of 2-isopropylmaleate. The sequence is that of 3-isopropylmalate dehydratase small subunit from Oleidesulfovibrio alaskensis (strain ATCC BAA-1058 / DSM 17464 / G20) (Desulfovibrio alaskensis).